The sequence spans 126 residues: DNA-directed RNA polymerase subunit omega (126 aa).

The protein belongs to the RNA polymerase subunit omega family. As to quaternary structure, the RNAP catalytic core consists of 2 alpha, 1 beta, 1 beta' and 1 omega subunit. When a sigma factor is associated with the core the holoenzyme is formed, which can initiate transcription.

The catalysed reaction is RNA(n) + a ribonucleoside 5'-triphosphate = RNA(n+1) + diphosphate. Its function is as follows. Promotes RNA polymerase assembly. Latches the N- and C-terminal regions of the beta' subunit thereby facilitating its interaction with the beta and alpha subunits. This is DNA-directed RNA polymerase subunit omega from Rickettsia bellii (strain OSU 85-389).